The primary structure comprises 242 residues: Tryptophan synthase alpha chain (242 aa).

Active-site proton acceptor residues include Glu31 and Asp42.

Belongs to the TrpA family. As to quaternary structure, tetramer of two alpha and two beta chains.

It catalyses the reaction (1S,2R)-1-C-(indol-3-yl)glycerol 3-phosphate + L-serine = D-glyceraldehyde 3-phosphate + L-tryptophan + H2O. It functions in the pathway amino-acid biosynthesis; L-tryptophan biosynthesis; L-tryptophan from chorismate: step 5/5. The alpha subunit is responsible for the aldol cleavage of indoleglycerol phosphate to indole and glyceraldehyde 3-phosphate. This chain is Tryptophan synthase alpha chain, found in Staphylococcus aureus (strain USA300).